Here is a 317-residue protein sequence, read N- to C-terminus: L-lactate dehydrogenase 1 (317 aa).

Residues valine 17, aspartate 38, lysine 43, tyrosine 69, and 83–84 (GA) each bind NAD(+). Substrate is bound by residues glutamine 86 and arginine 92. Residues serine 105, 122–124 (ATN), and serine 147 each bind NAD(+). 124-127 (NPVD) provides a ligand contact to substrate. 152–155 (DSAR) provides a ligand contact to substrate. The active-site Proton acceptor is histidine 179. A Phosphotyrosine modification is found at tyrosine 223. Threonine 232 contributes to the substrate binding site.

The protein belongs to the LDH/MDH superfamily. LDH family. As to quaternary structure, homotetramer.

It is found in the cytoplasm. It catalyses the reaction (S)-lactate + NAD(+) = pyruvate + NADH + H(+). It functions in the pathway fermentation; pyruvate fermentation to lactate; (S)-lactate from pyruvate: step 1/1. Its function is as follows. Catalyzes the conversion of lactate to pyruvate (Potential). Appears to be the primary factor that allows S.aureus growth during nitrosative stress in both aerobically and anaerobically cultured cells. This chain is L-lactate dehydrogenase 1, found in Staphylococcus aureus (strain USA300).